Here is a 279-residue protein sequence, read N- to C-terminus: GATA transcription factor 15 (279 aa).

A disordered region spans residues 52 to 94 (AYDDHSTVTTSPSSPSSSSTGSVDCTLSLGTPSSRRAEPVAAA). The segment covering 58–74 (TVTTSPSSPSSSSTGSV) has biased composition (low complexity). The GATA-type zinc finger occupies 154–179 (CANCGTASTPLWRNGPRGPKSLCNAC).

The protein belongs to the type IV zinc-finger family. Class B subfamily. As to expression, highly expressed in inflorescences. Expressed in vascular bundles of root stele within the elongation zones, of elongating upper internodes and of the junctions of leaf blades and sheaths.

Its function is as follows. Probable transcription factor that regulates organogenesis during transition from the vegetative to the reproductive phase. Regulates the expression of CYP78A11/PLA1, HD3A and MADS1 during reproductive development in rice. May act upstream of CYP78A11/PLA1 during panicle development. Acts independently of the photoperiodic and gibberellin signaling pathways. This chain is GATA transcription factor 15, found in Oryza sativa subsp. japonica (Rice).